Reading from the N-terminus, the 537-residue chain is O-phosphoserine--tRNA(Cys) ligase (537 aa).

Substrate is bound by residues His186 to Thr188, Ser231 to Ser233, Tyr273 to Tyr274, and Asn317.

This sequence belongs to the class-II aminoacyl-tRNA synthetase family. O-phosphoseryl-tRNA(Cys) synthetase subfamily. As to quaternary structure, homotetramer. Interacts with SepCysS.

The catalysed reaction is tRNA(Cys) + O-phospho-L-serine + ATP = O-phospho-L-seryl-tRNA(Cys) + AMP + diphosphate. Catalyzes the attachment of O-phosphoserine (Sep) to tRNA(Cys). This is O-phosphoserine--tRNA(Cys) ligase from Methanococcus vannielii (strain ATCC 35089 / DSM 1224 / JCM 13029 / OCM 148 / SB).